The sequence spans 713 residues: Forkhead box protein P2 (713 aa).

Residues 1 to 28 (MMQESATETISNSSMNQNGMSTLSSQLD) are compositionally biased toward polar residues. Disordered regions lie at residues 1 to 44 (MMQE…SSEV) and 283 to 337 (KHGG…TGAS). Residues 290–303 (TTNNSSSTTSSTTS) are compositionally biased toward low complexity. Residues 313–322 (SIVNGQSSVL) are compositionally biased toward polar residues. Over residues 324-335 (ARRDSSSHEETG) the composition is skewed to basic and acidic residues. The segment at 344–369 (GVCKWPGCESICEDFGQFLKHLNNEH) adopts a C2H2-type zinc-finger fold. The segment at 386 to 407 (VQQLEIQLSKERERLQAMMTHL) is leucine-zipper. The tract at residues 420–424 (PLNLV) is CTBP1-binding. A compositionally biased stretch (low complexity) spans 436–457 (TSPQSLPQTPTTPTAPVTPITQ). A disordered region spans residues 436-463 (TSPQSLPQTPTTPTAPVTPITQGPSVIT). A DNA-binding region (fork-head) is located at residues 502–592 (RPPFTYATLI…SQKITGSPTL (91 aa)). 2 disordered regions span residues 647–666 (LDHI…QPHI) and 676–713 (VIAE…EDLE). The segment covering 697–713 (LEDDREIEEEPLSEDLE) has biased composition (acidic residues).

In terms of assembly, forms homodimers and heterodimers with FOXP1 and FOXP4. Dimerization is required for DNA-binding. Interacts with CTBP1. Interacts with FOXP1. Interacts with TBR1. Interacts with ZMYM2.

It localises to the nucleus. Transcriptional repressor that may play a role in the specification and differentiation of lung epithelium. May also play a role in developing neural, gastrointestinal and cardiovascular tissues. Can act with CTBP1 to synergistically repress transcription but CTPBP1 is not essential. Plays a role in synapse formation by regulating SRPX2 levels. In Gorilla gorilla gorilla (Western lowland gorilla), this protein is Forkhead box protein P2 (FOXP2).